We begin with the raw amino-acid sequence, 466 residues long: Argininosuccinate lyase (466 aa).

The protein belongs to the lyase 1 family. Argininosuccinate lyase subfamily.

It localises to the cytoplasm. It catalyses the reaction 2-(N(omega)-L-arginino)succinate = fumarate + L-arginine. It participates in amino-acid biosynthesis; L-arginine biosynthesis; L-arginine from L-ornithine and carbamoyl phosphate: step 3/3. The sequence is that of Argininosuccinate lyase from Microcystis aeruginosa (strain NIES-843 / IAM M-2473).